The chain runs to 115 residues: ESX-1 secretion-associated protein EspL (115 aa).

In Mycobacterium tuberculosis (strain CDC 1551 / Oshkosh), this protein is ESX-1 secretion-associated protein EspL.